The chain runs to 1000 residues: Ribosome assembly protein 1 (1000 aa).

Positions 17–246 constitute a tr-type G domain; it reads ENIRNFTLLA…YEKKLGLKQK (230 aa). GTP is bound by residues 26–33, 100–104, and 154–157; these read AHVDHGKT, DSPGH, and NKMD.

Belongs to the TRAFAC class translation factor GTPase superfamily. Classic translation factor GTPase family.

It is found in the cytoplasm. It catalyses the reaction GTP + H2O = GDP + phosphate + H(+). With respect to regulation, GTPase activity is stimulated in the presence of 60S subunits. GTPase involved in the biogenesis of the 60S ribosomal subunit and translational activation of ribosomes. Together with sdo1, may trigger the GTP-dependent release of tif6 from 60S pre-ribosomes in the cytoplasm, thereby activating ribosomes for translation competence by allowing 80S ribosome assembly and facilitating tif6 recycling to the nucleus, where it is required for 60S rRNA processing and nuclear export. Inhibits GTPase activity of ribosome-bound EF-2. In Schizosaccharomyces pombe (strain 972 / ATCC 24843) (Fission yeast), this protein is Ribosome assembly protein 1 (ria1).